Here is a 263-residue protein sequence, read N- to C-terminus: Ubiquitin domain-containing protein 7SL RNA2 (263 aa).

The 53-residue stretch at 1–53 (MNVDIDTETGSSFSITIDFGETVLQIKEKIEKSQGIPVSKQILYLDGKALEDD) folds into the Ubiquitin-like 1 domain. A disordered region spans residues 74-93 (ADPNQSNEQTEQSKQIDDKK). Polar residues predominate over residues 76 to 86 (PNQSNEQTEQS). Residues 184–263 (FTVHVKPYQE…GDTIELIREK (80 aa)) form the Ubiquitin-like 2 domain.

This sequence belongs to the ubiquitin family. Expressed in seedlings, roots, stems, rosettes and flowers (at protein level).

It is found in the nucleus. Its function is as follows. Controls phase transition from the vegetative to the reproductive state. Involved in the maintenance of the shoot apical meristem (SAM) thus preventing inflorescence meristem (IM) formation and subsequent inflorescence stem development during flowering. Regulates leaf and organ morphology. This Arabidopsis thaliana (Mouse-ear cress) protein is Ubiquitin domain-containing protein 7SL RNA2.